Reading from the N-terminus, the 275-residue chain is UDP-Gal:alpha-D-GlcNAc-diphosphoundecaprenol beta-1,3-galactosyltransferase (275 aa).

This sequence belongs to the glycosyltransferase 2 family. Requires Mn(2+) as cofactor.

Its subcellular location is the cell inner membrane. It carries out the reaction N-acetyl-alpha-D-glucosaminyl-di-trans,octa-cis-undecaprenyl diphosphate + UDP-alpha-D-galactose = beta-D-Gal-(1-&gt;3)-alpha-D-GlcNAc-di-trans,octa-cis-undecaprenyl diphosphate + UDP + H(+). Its pathway is bacterial outer membrane biogenesis; LPS O-antigen biosynthesis. Its function is as follows. Catalyzes the addition of Gal, the second sugar moiety of the O7-antigen repeating unit, to GlcNAc-pyrophosphate-undecaprenol. This chain is UDP-Gal:alpha-D-GlcNAc-diphosphoundecaprenol beta-1,3-galactosyltransferase (wbbD), found in Escherichia coli.